The primary structure comprises 415 residues: Mitogen-activated protein kinase mpkC (415 aa).

The Protein kinase domain occupies 20-299 (YANLQPVGLG…AEQGLMHPWM (280 aa)). ATP contacts are provided by residues 26-34 (VGLGTAGVV) and Lys49. Asp141 (proton acceptor) is an active-site residue. Thr171 carries the post-translational modification Phosphothreonine. Positions 171-173 (TGY) match the TXY motif. Tyr173 carries the post-translational modification Phosphotyrosine.

It belongs to the protein kinase superfamily. Ser/Thr protein kinase family. MAP kinase subfamily. HOG1 sub-subfamily. Mg(2+) is required as a cofactor. In terms of processing, dually phosphorylated on Thr-171 and Tyr-173, which activates the enzyme.

It catalyses the reaction L-seryl-[protein] + ATP = O-phospho-L-seryl-[protein] + ADP + H(+). The enzyme catalyses L-threonyl-[protein] + ATP = O-phospho-L-threonyl-[protein] + ADP + H(+). Activated by tyrosine and threonine phosphorylation. Functionally, mitogen-activated protein kinase required for growth on media where sorbitol or mannitol is the sole carbon source. The protein is Mitogen-activated protein kinase mpkC (mpkC) of Emericella nidulans (strain FGSC A4 / ATCC 38163 / CBS 112.46 / NRRL 194 / M139) (Aspergillus nidulans).